The primary structure comprises 149 residues: MVDVVSEGIPVQDVEEFTEKYKNRRKQQMMRFIGSTAVTLISCRLAITRAKARHYVPNMFQLNYKPPVVTYKGETGPALVLATGITVGTLSMLVSGSCWIWDISTMKEFREIKGFSSEKVEHPRLANMPLESDSMRNVYERLELLNGKK.

2 consecutive transmembrane segments (helical) span residues 29–48 (MMRF…LAIT) and 79–101 (LVLA…CWIW).

It belongs to the AIM11 family.

The protein resides in the membrane. In Vanderwaltozyma polyspora (strain ATCC 22028 / DSM 70294 / BCRC 21397 / CBS 2163 / NBRC 10782 / NRRL Y-8283 / UCD 57-17) (Kluyveromyces polysporus), this protein is Altered inheritance of mitochondria protein 11 (AIM11).